The following is a 284-amino-acid chain: Ribosomal RNA small subunit methyltransferase A (284 aa).

His12, Leu14, Gly47, Glu68, Asp93, and Asn118 together coordinate S-adenosyl-L-methionine.

The protein belongs to the class I-like SAM-binding methyltransferase superfamily. rRNA adenine N(6)-methyltransferase family. RsmA subfamily.

It is found in the cytoplasm. The enzyme catalyses adenosine(1518)/adenosine(1519) in 16S rRNA + 4 S-adenosyl-L-methionine = N(6)-dimethyladenosine(1518)/N(6)-dimethyladenosine(1519) in 16S rRNA + 4 S-adenosyl-L-homocysteine + 4 H(+). Functionally, specifically dimethylates two adjacent adenosines (A1518 and A1519) in the loop of a conserved hairpin near the 3'-end of 16S rRNA in the 30S particle. May play a critical role in biogenesis of 30S subunits. The polypeptide is Ribosomal RNA small subunit methyltransferase A (Synechocystis sp. (strain ATCC 27184 / PCC 6803 / Kazusa)).